Reading from the N-terminus, the 238-residue chain is Ribonuclease PH (238 aa).

Residues Arg-86 and 124-126 (GTR) each bind phosphate.

Belongs to the RNase PH family. As to quaternary structure, homohexameric ring arranged as a trimer of dimers.

It catalyses the reaction tRNA(n+1) + phosphate = tRNA(n) + a ribonucleoside 5'-diphosphate. Phosphorolytic 3'-5' exoribonuclease that plays an important role in tRNA 3'-end maturation. Removes nucleotide residues following the 3'-CCA terminus of tRNAs; can also add nucleotides to the ends of RNA molecules by using nucleoside diphosphates as substrates, but this may not be physiologically important. Probably plays a role in initiation of 16S rRNA degradation (leading to ribosome degradation) during starvation. The chain is Ribonuclease PH from Azorhizobium caulinodans (strain ATCC 43989 / DSM 5975 / JCM 20966 / LMG 6465 / NBRC 14845 / NCIMB 13405 / ORS 571).